We begin with the raw amino-acid sequence, 270 residues long: NAD kinase (270 aa).

D62 serves as the catalytic Proton acceptor. NAD(+) is bound by residues 62 to 63 (DG), R67, 129 to 130 (ND), K140, D159, I167, 170 to 175 (TSYSFS), A194, and Q227.

The protein belongs to the NAD kinase family. Requires a divalent metal cation as cofactor.

It is found in the cytoplasm. It catalyses the reaction NAD(+) + ATP = ADP + NADP(+) + H(+). Involved in the regulation of the intracellular balance of NAD and NADP, and is a key enzyme in the biosynthesis of NADP. Catalyzes specifically the phosphorylation on 2'-hydroxyl of the adenosine moiety of NAD to yield NADP. This chain is NAD kinase, found in Picrophilus torridus (strain ATCC 700027 / DSM 9790 / JCM 10055 / NBRC 100828 / KAW 2/3).